Reading from the N-terminus, the 257-residue chain is Phosphonates import ATP-binding protein PhnC (257 aa).

The region spanning 2 to 246 is the ABC transporter domain; the sequence is IEFRNVSKVY…KFAEIYGDVV (245 aa). 35–42 serves as a coordination point for ATP; sequence GLSGAGKS.

This sequence belongs to the ABC transporter superfamily. Phosphonates importer (TC 3.A.1.9.1) family. As to quaternary structure, the complex is composed of two ATP-binding proteins (PhnC), two transmembrane proteins (PhnE) and a solute-binding protein (PhnD).

It is found in the cell membrane. It catalyses the reaction phosphonate(out) + ATP + H2O = phosphonate(in) + ADP + phosphate + H(+). In terms of biological role, part of the ABC transporter complex PhnCDE involved in phosphonates import. Responsible for energy coupling to the transport system. This is Phosphonates import ATP-binding protein PhnC from Bacillus anthracis.